The following is a 193-amino-acid chain: Bifunctional protein PyrR (193 aa).

Residues Thr57–Arg58, Arg98, Asp119–Ser127, Arg152, and Val176 contribute to the substrate site. Positions Val115–Ser127 match the PRPP-binding motif.

The protein belongs to the purine/pyrimidine phosphoribosyltransferase family. PyrR subfamily.

The catalysed reaction is UMP + diphosphate = 5-phospho-alpha-D-ribose 1-diphosphate + uracil. Its function is as follows. Regulates the transcription of the pyrimidine nucleotide (pyr) operon in response to exogenous pyrimidines. Functionally, also displays a weak uracil phosphoribosyltransferase activity which is not physiologically significant. The polypeptide is Bifunctional protein PyrR (Mycobacterium bovis (strain ATCC BAA-935 / AF2122/97)).